We begin with the raw amino-acid sequence, 256 residues long: Hydroxyacylglutathione hydrolase (256 aa).

Histidine 55, histidine 57, aspartate 59, histidine 60, histidine 113, aspartate 130, and histidine 168 together coordinate Zn(2+).

The protein belongs to the metallo-beta-lactamase superfamily. Glyoxalase II family. Monomer. Zn(2+) serves as cofactor.

It catalyses the reaction an S-(2-hydroxyacyl)glutathione + H2O = a 2-hydroxy carboxylate + glutathione + H(+). The protein operates within secondary metabolite metabolism; methylglyoxal degradation; (R)-lactate from methylglyoxal: step 2/2. In terms of biological role, thiolesterase that catalyzes the hydrolysis of S-D-lactoyl-glutathione to form glutathione and D-lactic acid. In Psychromonas ingrahamii (strain DSM 17664 / CCUG 51855 / 37), this protein is Hydroxyacylglutathione hydrolase.